The primary structure comprises 554 residues: Dihydroxy-acid dehydratase (554 aa).

A Mg(2+)-binding site is contributed by Asp-78. Cys-119 lines the [2Fe-2S] cluster pocket. The Mg(2+) site is built by Asp-120 and Lys-121. The residue at position 121 (Lys-121) is an N6-carboxylysine. Cys-191 is a binding site for [2Fe-2S] cluster. Mg(2+) is bound at residue Glu-442. Ser-468 serves as the catalytic Proton acceptor.

The protein belongs to the IlvD/Edd family. In terms of assembly, homodimer. It depends on [2Fe-2S] cluster as a cofactor. Mg(2+) is required as a cofactor.

The enzyme catalyses (2R)-2,3-dihydroxy-3-methylbutanoate = 3-methyl-2-oxobutanoate + H2O. It catalyses the reaction (2R,3R)-2,3-dihydroxy-3-methylpentanoate = (S)-3-methyl-2-oxopentanoate + H2O. It functions in the pathway amino-acid biosynthesis; L-isoleucine biosynthesis; L-isoleucine from 2-oxobutanoate: step 3/4. The protein operates within amino-acid biosynthesis; L-valine biosynthesis; L-valine from pyruvate: step 3/4. Functions in the biosynthesis of branched-chain amino acids. Catalyzes the dehydration of (2R,3R)-2,3-dihydroxy-3-methylpentanoate (2,3-dihydroxy-3-methylvalerate) into 2-oxo-3-methylpentanoate (2-oxo-3-methylvalerate) and of (2R)-2,3-dihydroxy-3-methylbutanoate (2,3-dihydroxyisovalerate) into 2-oxo-3-methylbutanoate (2-oxoisovalerate), the penultimate precursor to L-isoleucine and L-valine, respectively. This chain is Dihydroxy-acid dehydratase, found in Thermotoga petrophila (strain ATCC BAA-488 / DSM 13995 / JCM 10881 / RKU-1).